Reading from the N-terminus, the 758-residue chain is 5-methyltetrahydropteroyltriglutamate--homocysteine methyltransferase (758 aa).

5-methyltetrahydropteroyltri-L-glutamate contacts are provided by residues 17 to 20 (RELK) and Lys114. L-homocysteine-binding positions include 429-431 (IGS) and Glu482. L-methionine is bound by residues 429–431 (IGS) and Glu482. Residues 513-514 (RC) and Trp559 contribute to the 5-methyltetrahydropteroyltri-L-glutamate site. Asp597 is a binding site for L-homocysteine. Asp597 serves as a coordination point for L-methionine. Glu603 serves as a coordination point for 5-methyltetrahydropteroyltri-L-glutamate. Zn(2+) is bound by residues His639, Cys641, and Glu663. The Proton donor role is filled by His692. Residue Cys724 participates in Zn(2+) binding.

Belongs to the vitamin-B12 independent methionine synthase family. Zn(2+) serves as cofactor.

The enzyme catalyses 5-methyltetrahydropteroyltri-L-glutamate + L-homocysteine = tetrahydropteroyltri-L-glutamate + L-methionine. It participates in amino-acid biosynthesis; L-methionine biosynthesis via de novo pathway; L-methionine from L-homocysteine (MetE route): step 1/1. Its function is as follows. Catalyzes the transfer of a methyl group from 5-methyltetrahydrofolate to homocysteine resulting in methionine formation. This Buchnera aphidicola subsp. Acyrthosiphon pisum (strain APS) (Acyrthosiphon pisum symbiotic bacterium) protein is 5-methyltetrahydropteroyltriglutamate--homocysteine methyltransferase.